The sequence spans 489 residues: Siroheme synthase (489 aa).

The tract at residues 1–203 (MDFFPVFMRL…GREDAARETL (203 aa)) is precorrin-2 dehydrogenase /sirohydrochlorin ferrochelatase. Residues 22–23 (PV) and 43–44 (PA) contribute to the NAD(+) site. The uroporphyrinogen-III C-methyltransferase stretch occupies residues 218-489 (GEVFLVGAGP…ARSSTEGAEA (272 aa)). Residue proline 227 participates in S-adenosyl-L-methionine binding. The active-site Proton acceptor is the aspartate 250. Lysine 272 serves as the catalytic Proton donor. Residues 303 to 305 (GGD), isoleucine 308, 333 to 334 (TA), methionine 385, and glycine 414 contribute to the S-adenosyl-L-methionine site.

The protein in the N-terminal section; belongs to the precorrin-2 dehydrogenase / sirohydrochlorin ferrochelatase family. In the C-terminal section; belongs to the precorrin methyltransferase family.

The enzyme catalyses uroporphyrinogen III + 2 S-adenosyl-L-methionine = precorrin-2 + 2 S-adenosyl-L-homocysteine + H(+). It carries out the reaction precorrin-2 + NAD(+) = sirohydrochlorin + NADH + 2 H(+). It catalyses the reaction siroheme + 2 H(+) = sirohydrochlorin + Fe(2+). Its pathway is cofactor biosynthesis; adenosylcobalamin biosynthesis; precorrin-2 from uroporphyrinogen III: step 1/1. It participates in cofactor biosynthesis; adenosylcobalamin biosynthesis; sirohydrochlorin from precorrin-2: step 1/1. The protein operates within porphyrin-containing compound metabolism; siroheme biosynthesis; precorrin-2 from uroporphyrinogen III: step 1/1. It functions in the pathway porphyrin-containing compound metabolism; siroheme biosynthesis; siroheme from sirohydrochlorin: step 1/1. Its pathway is porphyrin-containing compound metabolism; siroheme biosynthesis; sirohydrochlorin from precorrin-2: step 1/1. In terms of biological role, multifunctional enzyme that catalyzes the SAM-dependent methylations of uroporphyrinogen III at position C-2 and C-7 to form precorrin-2 via precorrin-1. Then it catalyzes the NAD-dependent ring dehydrogenation of precorrin-2 to yield sirohydrochlorin. Finally, it catalyzes the ferrochelation of sirohydrochlorin to yield siroheme. The chain is Siroheme synthase from Thioalkalivibrio sulfidiphilus (strain HL-EbGR7).